We begin with the raw amino-acid sequence, 677 residues long: Methionine--tRNA ligase (677 aa).

A 'HIGH' region motif is present at residues 15 to 25 (PYANGSIHLGH). Zn(2+)-binding residues include Cys146, Cys149, Cys159, and Cys162. Residues 333–337 (KMSKS) carry the 'KMSKS' region motif. Lys336 contacts ATP. One can recognise a tRNA-binding domain in the interval 575–677 (DFAKIDLRVA…DGAKPGQQVK (103 aa)).

The protein belongs to the class-I aminoacyl-tRNA synthetase family. MetG type 1 subfamily. As to quaternary structure, homodimer. Zn(2+) serves as cofactor.

It is found in the cytoplasm. The enzyme catalyses tRNA(Met) + L-methionine + ATP = L-methionyl-tRNA(Met) + AMP + diphosphate. Is required not only for elongation of protein synthesis but also for the initiation of all mRNA translation through initiator tRNA(fMet) aminoacylation. The protein is Methionine--tRNA ligase of Salmonella paratyphi B (strain ATCC BAA-1250 / SPB7).